The chain runs to 201 residues: Small ribosomal subunit protein uS4c (201 aa).

Positions 14 to 43 (RLGALPGLTSKRPRAGSDLRNQSRPGKKSQ) are disordered. One can recognise an S4 RNA-binding domain in the interval 89-169 (MRLDNILFRL…LPKHLTFHTL (81 aa)).

The protein belongs to the universal ribosomal protein uS4 family. In terms of assembly, part of the 30S ribosomal subunit. Contacts protein S5. The interaction surface between S4 and S5 is involved in control of translational fidelity.

It localises to the plastid. It is found in the chloroplast. Its function is as follows. One of the primary rRNA binding proteins, it binds directly to 16S rRNA where it nucleates assembly of the body of the 30S subunit. In terms of biological role, with S5 and S12 plays an important role in translational accuracy. This is Small ribosomal subunit protein uS4c (rps4) from Gossypium hirsutum (Upland cotton).